Consider the following 248-residue polypeptide: Pyridoxine 5'-phosphate synthase (248 aa).

Asn-10 provides a ligand contact to 3-amino-2-oxopropyl phosphate. Residue 12–13 participates in 1-deoxy-D-xylulose 5-phosphate binding; the sequence is DH. Arg-21 lines the 3-amino-2-oxopropyl phosphate pocket. His-46 functions as the Proton acceptor in the catalytic mechanism. Residues Arg-48 and His-53 each contribute to the 1-deoxy-D-xylulose 5-phosphate site. The active-site Proton acceptor is Glu-73. Thr-103 is a binding site for 1-deoxy-D-xylulose 5-phosphate. His-194 functions as the Proton donor in the catalytic mechanism. 3-amino-2-oxopropyl phosphate is bound by residues Gly-195 and 216–217; that span reads GH.

Belongs to the PNP synthase family. In terms of assembly, homooctamer; tetramer of dimers.

The protein localises to the cytoplasm. It catalyses the reaction 3-amino-2-oxopropyl phosphate + 1-deoxy-D-xylulose 5-phosphate = pyridoxine 5'-phosphate + phosphate + 2 H2O + H(+). The protein operates within cofactor biosynthesis; pyridoxine 5'-phosphate biosynthesis; pyridoxine 5'-phosphate from D-erythrose 4-phosphate: step 5/5. Catalyzes the complicated ring closure reaction between the two acyclic compounds 1-deoxy-D-xylulose-5-phosphate (DXP) and 3-amino-2-oxopropyl phosphate (1-amino-acetone-3-phosphate or AAP) to form pyridoxine 5'-phosphate (PNP) and inorganic phosphate. This Legionella pneumophila (strain Paris) protein is Pyridoxine 5'-phosphate synthase.